A 387-amino-acid polypeptide reads, in one-letter code: Oxidase FUB9 (387 aa).

The segment at 1–20 (MSRTNLPIQPAKMSDATSSK) is disordered. Residues 18–379 (SSKPQIFSIQ…TPAHLSLLNA (362 aa)) enclose the FMN hydroxy acid dehydrogenase domain. Y44 provides a ligand contact to a 2-oxocarboxylate. FMN-binding residues include S126, Q150, and T178. R187 is a binding site for a 2-oxocarboxylate. FMN is bound at residue K250. The Proton acceptor role is filled by H274. Residue R277 participates in a 2-oxocarboxylate binding. Residues 305 to 309 (DGGFR) and 328 to 329 (GR) each bind FMN.

The protein belongs to the FMN-dependent alpha-hydroxy acid dehydrogenase family. Requires FMN as cofactor.

Its pathway is mycotoxin biosynthesis. In terms of biological role, oxidase; part of the gene cluster that mediates the biosynthesis of fusaric acid, a mycotoxin with low to moderate toxicity to animals and humans, but with high phytotoxic properties. L-aspartate is suggested as fusaric acid amino acid precursor that is activated and further processed to O-acetyl-L-homoserine by cluster enzymes aspartate kinase FUB3 and homoserine O-acetyltransferase FUB5, as well as enzymes of the primary metabolism. The polyketide synthase (PKS) FUB1 generates the triketide trans-2-hexenal which is presumptively released by the hydrolase FUB4 and linked to the NRPS-bound amino acid precursor by NAD(P)-dependent dehydrogenase FUB6. FUB1, FUB4, and the non-canonical NRPS Fub8 may form an enzyme complex. Further processing of the NRPS-bound intermediate might be carried out by FUB6 and the sulfhydrylase FUB7, enabling a spontaneous electrocyclization to close the carbon backbone of fusaric acid. Dihydrofusaric acid is likely to be released via reduction by the thioester reductase (TR) domain of FUB8 whereupon the final oxidation to fusaric acid may (also) be performed by the FMN-dependent dehydrogenase FUB9. This is Oxidase FUB9 from Gibberella moniliformis (strain M3125 / FGSC 7600) (Maize ear and stalk rot fungus).